Consider the following 320-residue polypeptide: uncharacterized protein (320 aa).

46-53 contributes to the ATP binding site; sequence DVPGVGKT.

It belongs to the MoxR family.

This is an uncharacterized protein from Bacillus subtilis (strain 168).